We begin with the raw amino-acid sequence, 71 residues long: Beta-defensin 7 (71 aa).

A signal peptide spans 1-22; it reads MRIHYVLFAFLLVLLSPFAAFS. Gln-23 carries the post-translational modification Pyrrolidone carboxylic acid. The propeptide occupies 23–25; that stretch reads QDI. 3 disulfides stabilise this stretch: Cys-31–Cys-58, Cys-38–Cys-52, and Cys-42–Cys-59.

The protein belongs to the beta-defensin family. LAP/TAP subfamily.

It localises to the secreted. Functionally, has bactericidal activity. The sequence is that of Beta-defensin 7 (Defb7) from Mus musculus (Mouse).